Consider the following 319-residue polypeptide: 7,8-didemethyl-8-hydroxy-5-deazariboflavin synthase (319 aa).

One can recognise a Radical SAM core domain in the interval 6 to 236 (VTYSPAFTLV…AEITIQIPPN (231 aa)). Residues Cys-20, Cys-24, and Cys-27 each contribute to the [4Fe-4S] cluster site.

Belongs to the radical SAM superfamily. CofG family. In terms of assembly, consists of two subunits, CofG and CofH. [4Fe-4S] cluster serves as cofactor.

The enzyme catalyses 5-amino-5-(4-hydroxybenzyl)-6-(D-ribitylimino)-5,6-dihydrouracil + S-adenosyl-L-methionine = 7,8-didemethyl-8-hydroxy-5-deazariboflavin + 5'-deoxyadenosine + L-methionine + NH4(+) + H(+). It participates in cofactor biosynthesis; coenzyme F0 biosynthesis. In terms of biological role, catalyzes the radical-mediated synthesis of 7,8-didemethyl-8-hydroxy-5-deazariboflavin from 5-amino-5-(4-hydroxybenzyl)-6-(D-ribitylimino)-5,6-dihydrouracil. The polypeptide is 7,8-didemethyl-8-hydroxy-5-deazariboflavin synthase (Gloeobacter violaceus (strain ATCC 29082 / PCC 7421)).